The primary structure comprises 252 residues: MERVLIVNADDFGLSKGQNYGIVEAYRNGVVTSTTALVNGEAIDHAAQLSRELPALGVGMHFVLTLGKPVSEMPGLTRDGLLGKWIWQMAEEDTLPLDEIAHELACQYQRFIDVFGSEPTHLDSHHHVHMFPQIFPIVARFAAQRGIALRIDRQTVLNADDLPSDLRSTQGFSSEFYGEEITEACFLRILDASAHRGEASLEVMCHPAFVDNIIRQSAYCYPRLTELEVLTSASLKAAIAERGYRPGSFLDI.

Residues His-61 and His-125 each coordinate Mg(2+).

Belongs to the YdjC deacetylase family. ChbG subfamily. In terms of assembly, homodimer. Mg(2+) is required as a cofactor.

The protein resides in the cytoplasm. It carries out the reaction N,N'-diacetylchitobiose + H2O = N-acetyl-beta-D-glucosaminyl-(1-&gt;4)-D-glucosamine + acetate. It catalyses the reaction diacetylchitobiose-6'-phosphate + H2O = N'-monoacetylchitobiose-6'-phosphate + acetate. It functions in the pathway glycan degradation; chitin degradation. Functionally, involved in the degradation of chitin. ChbG is essential for growth on the acetylated chitooligosaccharides chitobiose and chitotriose but is dispensable for growth on cellobiose and chitosan dimer, the deacetylated form of chitobiose. Deacetylation of chitobiose-6-P and chitotriose-6-P is necessary for both the activation of the chb promoter by the regulatory protein ChbR and the hydrolysis of phosphorylated beta-glucosides by the phospho-beta-glucosidase ChbF. Catalyzes the removal of only one acetyl group from chitobiose-6-P to yield monoacetylchitobiose-6-P, the inducer of ChbR and the substrate of ChbF. In Salmonella typhimurium (strain LT2 / SGSC1412 / ATCC 700720), this protein is Chitooligosaccharide deacetylase.